The following is a 384-amino-acid chain: Sialyltransferase-like protein 3 (384 aa).

The Cytoplasmic segment spans residues M1 to H5. A helical; Signal-anchor for type II membrane protein membrane pass occupies residues W6–F26. Residues R27–R384 lie on the Lumenal side of the membrane. A glycan (N-linked (GlcNAc...) asparagine) is linked at N241.

It belongs to the glycosyltransferase 29 family.

Its subcellular location is the golgi apparatus membrane. Possesses sialyltransferase-like activity in vitro. Transfers sialic acid to the glycoprotein asialofetuin. The transferred sialic acid is linked to galactose of Gal-beta-1,3-GalNAc through alpha-2,6-linkage. The chain is Sialyltransferase-like protein 3 from Oryza sativa subsp. japonica (Rice).